The sequence spans 199 residues: NAD(P)H dehydrogenase (quinone) (199 aa).

The Flavodoxin-like domain maps to 4–190 (VLVLYYSAYG…DAARFQGAHV (187 aa)). FMN is bound by residues 10–15 (SAYGHI) and 78–80 (TRY). An NAD(+)-binding site is contributed by Tyr-12. Residue Trp-98 participates in substrate binding. FMN is bound by residues 113-119 (SSATQHG) and His-134.

It belongs to the WrbA family. FMN is required as a cofactor.

The catalysed reaction is a quinone + NADH + H(+) = a quinol + NAD(+). It carries out the reaction a quinone + NADPH + H(+) = a quinol + NADP(+). The chain is NAD(P)H dehydrogenase (quinone) from Sinorhizobium fredii (strain NBRC 101917 / NGR234).